The following is a 190-amino-acid chain: Glutamyl-tRNA(Gln) amidotransferase subunit C, mitochondrial (190 aa).

Residues 1-96 (MISFQIILQQ…VLNLKQAVRF (96 aa)) constitute a mitochondrion transit peptide. Residues 28–57 (KSNSTAVGSSDEDDEIYVPKKPIPSPIDQS) form a disordered region.

The protein belongs to the GatC family. As to quaternary structure, subunit of the heterotrimeric GatCAB amidotransferase (AdT) complex, composed of A, B and C subunits.

It is found in the mitochondrion. The enzyme catalyses L-glutamyl-tRNA(Gln) + L-glutamine + ATP + H2O = L-glutaminyl-tRNA(Gln) + L-glutamate + ADP + phosphate + H(+). Its function is as follows. Allows the formation of correctly charged Gln-tRNA(Gln) through the transamidation of misacylated Glu-tRNA(Gln) in the mitochondria. The reaction takes place in the presence of glutamine and ATP through an activated gamma-phospho-Glu-tRNA(Gln). The protein is Glutamyl-tRNA(Gln) amidotransferase subunit C, mitochondrial of Loa loa (Eye worm).